A 155-amino-acid polypeptide reads, in one-letter code: Ribosome maturation factor RimP (155 aa).

Belongs to the RimP family.

It localises to the cytoplasm. Functionally, required for maturation of 30S ribosomal subunits. In Salinibacter ruber (strain DSM 13855 / M31), this protein is Ribosome maturation factor RimP.